Here is a 301-residue protein sequence, read N- to C-terminus: MKNFNLILVIGATASGKTRLGVELARQLEGEIISADSRQVYKGLDIGSGKDLAEYGEVPHHLIDIVEPGHEYNAFQFQQDFFEAFTYIESRNKQPILVGGTGLYVDAVVSGYEFVQLDKDLALRAELDLQPLEQVQKLLLELDAAQYEKTDLTVRPRLYRAIEIAKNKQTNPKPAKALPEIRPLYFGIQWDRKVLRKRIKTRLKERFEQGMVEEVQGLLDNGVSHEQLEYYGLEYRFVSQYIAGQIGYEEMFDRLNTAICQYAKRQETWFRRIEKHGGKIHWLQGSGDIYQQACEVLADLG.

11–18 (GATASGKT) is a binding site for ATP. 13 to 18 (TASGKT) contributes to the substrate binding site. The interval 36 to 39 (DSRQ) is interaction with substrate tRNA.

This sequence belongs to the IPP transferase family. Monomer. Mg(2+) is required as a cofactor.

The catalysed reaction is adenosine(37) in tRNA + dimethylallyl diphosphate = N(6)-dimethylallyladenosine(37) in tRNA + diphosphate. Catalyzes the transfer of a dimethylallyl group onto the adenine at position 37 in tRNAs that read codons beginning with uridine, leading to the formation of N6-(dimethylallyl)adenosine (i(6)A). This Shewanella sediminis (strain HAW-EB3) protein is tRNA dimethylallyltransferase 2.